Here is a 415-residue protein sequence, read N- to C-terminus: Serine hydroxymethyltransferase (415 aa).

Residues leucine 117 and glycine 121 to leucine 123 contribute to the (6S)-5,6,7,8-tetrahydrofolate site. Lysine 226 carries the post-translational modification N6-(pyridoxal phosphate)lysine. Glutamate 241 is a binding site for (6S)-5,6,7,8-tetrahydrofolate.

This sequence belongs to the SHMT family. As to quaternary structure, homodimer. Requires pyridoxal 5'-phosphate as cofactor.

It localises to the cytoplasm. The catalysed reaction is (6R)-5,10-methylene-5,6,7,8-tetrahydrofolate + glycine + H2O = (6S)-5,6,7,8-tetrahydrofolate + L-serine. It functions in the pathway one-carbon metabolism; tetrahydrofolate interconversion. The protein operates within amino-acid biosynthesis; glycine biosynthesis; glycine from L-serine: step 1/1. Its function is as follows. Catalyzes the reversible interconversion of serine and glycine with tetrahydrofolate (THF) serving as the one-carbon carrier. This reaction serves as the major source of one-carbon groups required for the biosynthesis of purines, thymidylate, methionine, and other important biomolecules. Also exhibits THF-independent aldolase activity toward beta-hydroxyamino acids, producing glycine and aldehydes, via a retro-aldol mechanism. This Bacillus licheniformis (strain ATCC 14580 / DSM 13 / JCM 2505 / CCUG 7422 / NBRC 12200 / NCIMB 9375 / NCTC 10341 / NRRL NRS-1264 / Gibson 46) protein is Serine hydroxymethyltransferase.